The sequence spans 1415 residues: Uveal autoantigen with coiled-coil domains and ankyrin repeats (1415 aa).

ANK repeat units follow at residues 69–98 (EGRS…DITT), 102–131 (AGRN…PTEH), 135–164 (QGRT…SVNA), 168–197 (DGRT…EINS), and 201–230 (QNRT…DVSL). A coiled-coil region spans residues 288-376 (VKSSQREHRN…TIESLKNRFK (89 aa)). The ANK 6 repeat unit spans residues 617–646 (ELLAKLTLSVPTEKFESMKSLLSSEVNEKV). A coiled-coil region spans residues 759 to 1381 (TVEELKKQLL…TDRQHQEVIA (623 aa)). A Glycyl lysine isopeptide (Lys-Gly) (interchain with G-Cter in SUMO2) cross-link involves residue Lys1034. The span at 1186–1201 (LREKEEESQNKTEEVS) shows a compositional bias: basic and acidic residues. A disordered region spans residues 1186–1205 (LREKEEESQNKTEEVSKLQS).

In terms of assembly, component of the apoptosome complex, composed of APAF1, pro-caspase-9 and UACA. In the complex, it probably interacts directly with APAF1. Interacts with LGALS3, ARF6 and ACTB. Interacts with RAB39A. In terms of tissue distribution, highly expressed in adrenal, testis, kidney and large intestine.

It is found in the nucleus. The protein resides in the cytoplasm. Its subcellular location is the cytoskeleton. Its function is as follows. Regulates APAF1 expression and plays an important role in the regulation of stress-induced apoptosis. Promotes apoptosis by regulating three pathways, apoptosome up-regulation, LGALS3/galectin-3 down-regulation and NF-kappa-B inactivation. Regulates the redistribution of APAF1 into the nucleus after proapoptotic stress. Down-regulates the expression of LGALS3 by inhibiting NFKB1. Functionally, modulates isoactin dynamics to regulate the morphological alterations required for cell growth and motility. Interaction with ARF6 may modulate cell shape and motility after injury. May be involved in multiple neurite formation. In Canis lupus familiaris (Dog), this protein is Uveal autoantigen with coiled-coil domains and ankyrin repeats (UACA).